Reading from the N-terminus, the 137-residue chain is ER-derived vesicles protein erv14 (137 aa).

Over 1 to 9 (MMSFGSFVY) the chain is Cytoplasmic. The helical transmembrane segment at 10-30 (IACLLLNGANMLLQIFCVIMF) threads the bilayer. The Extracellular segment spans residues 31–62 (SDLEMDYINPIDLCNKLNDLVMPEIISHTLVT). The helical transmembrane segment at 63–83 (LLLLLGKKWLLFLANLPLLVF) threads the bilayer. At 84-114 (HANQVIHKTHILDATEIFRQLGRHKRDNFIK) the chain is on the cytoplasmic side. The chain crosses the membrane as a helical span at residues 115–135 (VTFYLIMFFTLLYCMVMSLIQ). The Extracellular segment spans residues 136-137 (EE).

It belongs to the cornichon family.

The protein localises to the endoplasmic reticulum. It is found in the membrane. The protein resides in the golgi apparatus membrane. Regulates export of the secretory proteins from the endoplasmic reticulum in COPII-coated vesicles. This is ER-derived vesicles protein erv14 (erv14) from Schizosaccharomyces pombe (strain 972 / ATCC 24843) (Fission yeast).